The primary structure comprises 92 residues: C-C motif chemokine 4 (92 aa).

The first 23 residues, 1 to 23 (MKLCVSAFSLLLLVAAFCDSVLS), serve as a signal peptide directing secretion. 2 disulfides stabilise this stretch: C34/C58 and C35/C74.

The protein belongs to the intercrine beta (chemokine CC) family. As to quaternary structure, homodimer.

The protein resides in the secreted. Its function is as follows. Monokine with inflammatory and chemokinetic properties. The polypeptide is C-C motif chemokine 4 (Ccl4) (Rattus norvegicus (Rat)).